The following is a 348-amino-acid chain: Eukaryotic translation initiation factor 3 subunit H (348 aa).

The segment at 1-25 (MASRKEGSGAAGGGFGASKGKGKAA) is disordered. Positions 9 to 19 (GAAGGGFGASK) are enriched in gly residues. The MPN domain maps to 35 to 169 (VQIDGLVVLK…LKAYRLTPKL (135 aa)). Low complexity predominate over residues 266-285 (QQQQKHQYQQRRQQENLQRQ). The disordered stretch occupies residues 266–304 (QQQQKHQYQQRRQQENLQRQSRGEAPLPEEDINKLFKPP).

It belongs to the eIF-3 subunit H family. In terms of assembly, component of the eukaryotic translation initiation factor 3 (eIF-3) complex, which is composed of 13 subunits: EIF3A, EIF3B, EIF3C, EIF3D, EIF3E, EIF3F, EIF3G, EIF3H, EIF3I, EIF3J, EIF3K, EIF3L and EIF3M.

It localises to the cytoplasm. Its function is as follows. Component of the eukaryotic translation initiation factor 3 (eIF-3) complex, which is involved in protein synthesis of a specialized repertoire of mRNAs and, together with other initiation factors, stimulates binding of mRNA and methionyl-tRNAi to the 40S ribosome. The eIF-3 complex specifically targets and initiates translation of a subset of mRNAs involved in cell proliferation. The protein is Eukaryotic translation initiation factor 3 subunit H of Gallus gallus (Chicken).